A 155-amino-acid polypeptide reads, in one-letter code: Putative pre-16S rRNA nuclease (155 aa).

This sequence belongs to the YqgF nuclease family.

Its subcellular location is the cytoplasm. Its function is as follows. Could be a nuclease involved in processing of the 5'-end of pre-16S rRNA. In Paramagnetospirillum magneticum (strain ATCC 700264 / AMB-1) (Magnetospirillum magneticum), this protein is Putative pre-16S rRNA nuclease.